A 198-amino-acid polypeptide reads, in one-letter code: Pyridoxal 5'-phosphate synthase subunit PdxT (198 aa).

L-glutamine is bound at residue 52 to 54; that stretch reads GES. The active-site Nucleophile is C84. L-glutamine contacts are provided by residues R115 and 142-143; that span reads IR. Residues H178 and E180 each act as charge relay system in the active site.

It belongs to the glutaminase PdxT/SNO family. In terms of assembly, in the presence of PdxS, forms a dodecamer of heterodimers. Only shows activity in the heterodimer.

The catalysed reaction is aldehydo-D-ribose 5-phosphate + D-glyceraldehyde 3-phosphate + L-glutamine = pyridoxal 5'-phosphate + L-glutamate + phosphate + 3 H2O + H(+). It carries out the reaction L-glutamine + H2O = L-glutamate + NH4(+). Its pathway is cofactor biosynthesis; pyridoxal 5'-phosphate biosynthesis. Catalyzes the hydrolysis of glutamine to glutamate and ammonia as part of the biosynthesis of pyridoxal 5'-phosphate. The resulting ammonia molecule is channeled to the active site of PdxS. The sequence is that of Pyridoxal 5'-phosphate synthase subunit PdxT from Archaeoglobus fulgidus (strain ATCC 49558 / DSM 4304 / JCM 9628 / NBRC 100126 / VC-16).